A 404-amino-acid polypeptide reads, in one-letter code: Mitochondrial potassium channel (404 aa).

The transit peptide at 1–30 (MTGRSRVLAMRHVGGVSPVLVRRDLFLTRT) directs the protein to the mitochondrion. The Mitochondrial matrix segment spans residues 31–196 (LCSHGPSQPR…KERTRAERTK (166 aa)). Residue Ser65 is modified to Phosphoserine. Positions 111 to 138 (VREAREDLESQQTKLKEVRDRLDRISRD) form a coiled coil. A helical membrane pass occupies residues 197-217 (NWSLIGSVLGALIGVAGSTYV). Over 218–380 (NRVRLQELKA…LEAQVNRNTV (163 aa)) the chain is Mitochondrial intermembrane. Residues 381-401 (YGTLVTCATFVAVLPVLYMLF) traverse the membrane as a helical segment. Topologically, residues 402–404 (RAS) are mitochondrial matrix.

The mitochondrial potassium channel (mitoK(ATP)) forms a heteromultimer.

It is found in the mitochondrion inner membrane. The catalysed reaction is K(+)(in) = K(+)(out). Its activity is regulated as follows. Channel activity inhibited by ATP via ABCB8/MITOSUR subunit. In terms of biological role, pore-forming subunit of the mitochondrial ATP-gated potassium channel (mitoK(ATP)). Together with ATP-binding subunit ABCB8/MITOSUR of the mitoK(ATP) channel, mediates ATP-dependent K(+) currents across the mitochondrial inner membrane. An increase in ATP intracellular levels closes the channel, inhibiting K(+) transport, whereas a decrease in ATP levels enhances K(+) uptake in the mitochondrial matrix. May contribute to the homeostatic control of cellular metabolism under stress conditions by regulating the mitochondrial matrix volume. The sequence is that of Mitochondrial potassium channel from Bos taurus (Bovine).